We begin with the raw amino-acid sequence, 81 residues long: Sulfur carrier protein TusA (81 aa).

Cys19 (cysteine persulfide intermediate) is an active-site residue.

Belongs to the sulfur carrier protein TusA family. In terms of assembly, interacts with IscS.

The protein localises to the cytoplasm. The protein operates within tRNA modification. Its function is as follows. Sulfur carrier protein involved in sulfur trafficking in the cell. Part of a sulfur-relay system required for 2-thiolation during synthesis of 2-thiouridine of the modified wobble base 5-methylaminomethyl-2-thiouridine (mnm(5)s(2)U) in tRNA. Interacts with IscS and stimulates its cysteine desulfurase activity. Accepts an activated sulfur from IscS, which is then transferred to TusD, and thus determines the direction of sulfur flow from IscS to 2-thiouridine formation. Also appears to be involved in sulfur transfer for the biosynthesis of molybdopterin. This chain is Sulfur carrier protein TusA, found in Citrobacter koseri (strain ATCC BAA-895 / CDC 4225-83 / SGSC4696).